Reading from the N-terminus, the 438-residue chain is Na(+)/H(+) antiporter NhaA (438 aa).

11 consecutive transmembrane segments (helical) span residues 23–43 (FGGIFLFLNAVLAMVVANSFL), 62–82 (FFIGFSLHNWIDDVLMALFFL), 104–124 (SFPVIAAIGGMIAPGLIYFFL), 133–153 (GFGIPMATDIAFALGVIMLLG), 162–182 (VFLITLAVADDLGAIVVIALF), 185–205 (TNLKFAWLLGALGVVLVLAIL), 212–232 (SLIPYLLLGVLLWFCVHQSGI), 302–322 (FLAPISGYFIMPLFAFANAGV), 337–357 (LGVILGLCLGKPLGIFLITFI), 372–392 (WWHILGAGLLAGIGFTMSMFI), and 410–430 (IAILLGSLISGIIGALYLFAL).

Belongs to the NhaA Na(+)/H(+) (TC 2.A.33) antiporter family.

The protein resides in the cell inner membrane. The enzyme catalyses Na(+)(in) + 2 H(+)(out) = Na(+)(out) + 2 H(+)(in). In terms of biological role, na(+)/H(+) antiporter that extrudes sodium in exchange for external protons. The sequence is that of Na(+)/H(+) antiporter NhaA from Helicobacter pylori (strain J99 / ATCC 700824) (Campylobacter pylori J99).